The chain runs to 571 residues: ATP-dependent RNA helicase RhlB (571 aa).

Positions 9–37 (VTFSSFDLHPALIAGLESAGFTRCTPIQA) match the Q motif motif. The Helicase ATP-binding domain occupies 40–220 (LPVALPGGDV…YEHMNEPEKL (181 aa)). Residue 53–60 (AQTGTGKT) coordinates ATP. The DEAD box motif lies at 166–169 (DEAD). One can recognise a Helicase C-terminal domain in the interval 231-393 (RVRQRIYFPS…PVTSELLTPL (163 aa)). Residues 391-558 (TPLPRAPRVP…KPSGSPSLLS (168 aa)) are disordered. Over residues 402 to 411 (EGEEADDDAG) the composition is skewed to acidic residues. Residues 419-432 (REAREQRAAEEQRR) show a composition bias toward basic and acidic residues. Gly residues predominate over residues 435–448 (GRGGPGGSRSGSGG). Positions 449-460 (GRRDGAGADGKP) are enriched in basic and acidic residues. Residues 483-497 (VVAAVAAQAPSAGVA) are compositionally biased toward low complexity. The segment covering 503–512 (PRKRRRRRNG) has biased composition (basic residues). The segment covering 539-558 (VVAKPVRAAAKPSGSPSLLS) has biased composition (low complexity).

Belongs to the DEAD box helicase family. RhlB subfamily. As to quaternary structure, component of the RNA degradosome, which is a multiprotein complex involved in RNA processing and mRNA degradation.

Its subcellular location is the cytoplasm. The catalysed reaction is ATP + H2O = ADP + phosphate + H(+). DEAD-box RNA helicase involved in RNA degradation. Has RNA-dependent ATPase activity and unwinds double-stranded RNA. The sequence is that of ATP-dependent RNA helicase RhlB from Xanthomonas axonopodis pv. citri (strain 306).